The following is a 935-amino-acid chain: Isoleucine--tRNA ligase (935 aa).

A 'HIGH' region motif is present at residues 58–68 (PYANGNLHLGH). Residue Glu559 coordinates L-isoleucyl-5'-AMP. A 'KMSKS' region motif is present at residues 600-604 (KMSKS). Lys603 contacts ATP. Cys898, Cys901, Cys918, and Cys921 together coordinate Zn(2+).

It belongs to the class-I aminoacyl-tRNA synthetase family. IleS type 1 subfamily. As to quaternary structure, monomer. Requires Zn(2+) as cofactor.

The protein resides in the cytoplasm. The enzyme catalyses tRNA(Ile) + L-isoleucine + ATP = L-isoleucyl-tRNA(Ile) + AMP + diphosphate. Catalyzes the attachment of isoleucine to tRNA(Ile). As IleRS can inadvertently accommodate and process structurally similar amino acids such as valine, to avoid such errors it has two additional distinct tRNA(Ile)-dependent editing activities. One activity is designated as 'pretransfer' editing and involves the hydrolysis of activated Val-AMP. The other activity is designated 'posttransfer' editing and involves deacylation of mischarged Val-tRNA(Ile). This Haemophilus ducreyi (strain 35000HP / ATCC 700724) protein is Isoleucine--tRNA ligase.